Here is an 83-residue protein sequence, read N- to C-terminus: U20-theraphotoxin-Cg1a 1 (83 aa).

Positions 1–21 (MKVSVLITLAVLGVMFVWTSA) are cleaved as a signal peptide. Positions 22–47 (AELEERGSDQPAWLKSLERIFQSEER) are excised as a propeptide. Intrachain disulfides connect cysteine 49/cysteine 63, cysteine 56/cysteine 68, and cysteine 62/cysteine 76.

It belongs to the neurotoxin 10 (Hwtx-1) family. 40 (Jztx-35) subfamily. Expressed by the venom gland.

It localises to the secreted. Its function is as follows. Probable ion channel inhibitor. This chain is U20-theraphotoxin-Cg1a 1, found in Chilobrachys guangxiensis (Chinese earth tiger tarantula).